Here is a 689-residue protein sequence, read N- to C-terminus: Glycine--tRNA ligase beta subunit (689 aa).

This sequence belongs to the class-II aminoacyl-tRNA synthetase family. As to quaternary structure, tetramer of two alpha and two beta subunits.

It is found in the cytoplasm. The catalysed reaction is tRNA(Gly) + glycine + ATP = glycyl-tRNA(Gly) + AMP + diphosphate. The chain is Glycine--tRNA ligase beta subunit from Shewanella piezotolerans (strain WP3 / JCM 13877).